An 82-amino-acid chain; its full sequence is Conotoxin Cal30 (82 aa).

A signal peptide spans 1–19; sequence MEKLIILLLVASLLVTTDS.

Post-translationally, may contain 5 disulfide bonds. In terms of tissue distribution, expressed by the venom duct.

It is found in the secreted. In terms of biological role, probable neurotoxin. This chain is Conotoxin Cal30, found in Californiconus californicus (California cone).